The sequence spans 567 residues: Sensor histidine kinase MtrB (567 aa).

Basic residues predominate over residues 1 to 15; sequence MIFGSRRRIRGRRGR. The segment at 1–20 is disordered; that stretch reads MIFGSRRRIRGRRGRSGPMT. 2 helical membrane passes run 42–62 and 213–233; these read VVALTLGLSLAVILALGFVLT and GTMATGGLVLLVLLAGIALLV. Positions 235–287 constitute an HAMP domain; the sequence is RQVVVPVRSASRIAERFAEGHLSERMPVRGEDDMARLAVSFNDMAESLSRQIA. The 218-residue stretch at 302–519 folds into the Histidine kinase domain; it reads DVSHELRTPL…CFRLTLPMVR (218 aa). At His305 the chain carries Phosphohistidine; by autocatalysis. The span at 529–551 shows a compositional bias: pro residues; the sequence is PMKPIPQPVLQPVAQPNPQPMPP. The tract at residues 529–567 is disordered; it reads PMKPIPQPVLQPVAQPNPQPMPPEYKERQRPREHAEWSG. Basic and acidic residues predominate over residues 552–567; sequence EYKERQRPREHAEWSG.

In terms of assembly, interacts with MrtA. Interacts with LpqB, probably extracytoplasmically via MtrB's sensor domain. Requires Mg(2+) as cofactor. It depends on Ca(2+) as a cofactor. The C-terminal domain (residues 234-567) autophosphorylates.

It is found in the cell membrane. It catalyses the reaction ATP + protein L-histidine = ADP + protein N-phospho-L-histidine.. With respect to regulation, ca(2+) ions inhibit the phosphotransfer from MtrB to MtrA. Functionally, member of the two-component regulatory system MtrA/MtrB. Probably functions as a membrane-associated protein kinase that phosphorylates MtrA in response to environmental signals. Autophosphorylates and transfers phosphate to MtrA in vitro. Overexpression of MtrA alone decreases bacterial virulence in mouse infection; co-expression of MtrA and MtrB restores normal bacterial growth, suggesting that bacterial growth in macrophages requires an optimal ratio of MtrB to MtrA. Probably plays a role in cell division. The chain is Sensor histidine kinase MtrB (mtrB) from Mycobacterium tuberculosis (strain ATCC 25618 / H37Rv).